The chain runs to 151 residues: Transcription antitermination protein NusB (151 aa).

It belongs to the NusB family.

Its function is as follows. Involved in transcription antitermination. Required for transcription of ribosomal RNA (rRNA) genes. Binds specifically to the boxA antiterminator sequence of the ribosomal RNA (rrn) operons. The protein is Transcription antitermination protein NusB of Hamiltonella defensa subsp. Acyrthosiphon pisum (strain 5AT).